The chain runs to 182 residues: MMSGVPPLKPSRSFLPQDSGPMLHRSPSGAKRKIRQKREEASRPSPFLSPSSSSSQTSISPTPTETSSNYRSLVDSGDYQSILPDFDPSFVPVPTPRLSVPFSASMSTLELSSSTLSSPVTAPAPPPPPTSKPTVEVHPMPTDERSPSMASSLNGSIDIDIYKPKPPVPIKPKGLRIDHLNR.

Disordered regions lie at residues 1–73 (MMSG…YRSL) and 105–182 (SMST…HLNR). 2 stretches are compositionally biased toward low complexity: residues 43 to 68 (RPSP…ETSS) and 105 to 121 (SMST…SPVT). Positions 122-131 (APAPPPPPTS) are enriched in pro residues.

This is an uncharacterized protein from Caenorhabditis elegans.